The sequence spans 444 residues: Protein translocase subunit SecY (444 aa).

Helical transmembrane passes span 24-44, 77-97, 123-143, 153-173, 181-201, 215-235, 269-289, 318-338, 376-396, and 400-420; these read FFVI…IPGI, ILAL…LLTV, GTLV…PNMV, MFTL…MWLG, IGNG…PKAI, VLLL…VVFM, MAGV…GTLA, YVML…ALVF, LAGA…MVAW, and FYFG…FMAQ.

Belongs to the SecY/SEC61-alpha family. In terms of assembly, component of the Sec protein translocase complex. Heterotrimer consisting of SecY, SecE and SecG subunits. The heterotrimers can form oligomers, although 1 heterotrimer is thought to be able to translocate proteins. Interacts with the ribosome. Interacts with SecDF, and other proteins may be involved. Interacts with SecA.

It is found in the cell inner membrane. The central subunit of the protein translocation channel SecYEG. Consists of two halves formed by TMs 1-5 and 6-10. These two domains form a lateral gate at the front which open onto the bilayer between TMs 2 and 7, and are clamped together by SecE at the back. The channel is closed by both a pore ring composed of hydrophobic SecY resides and a short helix (helix 2A) on the extracellular side of the membrane which forms a plug. The plug probably moves laterally to allow the channel to open. The ring and the pore may move independently. The protein is Protein translocase subunit SecY of Vibrio cholerae serotype O1 (strain ATCC 39315 / El Tor Inaba N16961).